Here is a 98-residue protein sequence, read N- to C-terminus: NADH-ubiquinone oxidoreductase chain 4L (98 aa).

The next 3 membrane-spanning stretches (helical) occupy residues 2–22 (SPAVLNITMAFTFSLLGTLMF), 26–46 (LMSTLLCLEGMMLSLFMLATI), and 59–79 (IPIAILVFAACEAAVGLALLA).

The protein belongs to the complex I subunit 4L family. Core subunit of respiratory chain NADH dehydrogenase (Complex I) which is composed of 45 different subunits.

It is found in the mitochondrion inner membrane. It catalyses the reaction a ubiquinone + NADH + 5 H(+)(in) = a ubiquinol + NAD(+) + 4 H(+)(out). Core subunit of the mitochondrial membrane respiratory chain NADH dehydrogenase (Complex I) which catalyzes electron transfer from NADH through the respiratory chain, using ubiquinone as an electron acceptor. Part of the enzyme membrane arm which is embedded in the lipid bilayer and involved in proton translocation. This Alexandromys kikuchii (Taiwan vole) protein is NADH-ubiquinone oxidoreductase chain 4L (MT-ND4L).